The following is a 180-amino-acid chain: Translation initiation factor IF-3 (180 aa).

The protein belongs to the IF-3 family. Monomer.

The protein localises to the cytoplasm. Functionally, IF-3 binds to the 30S ribosomal subunit and shifts the equilibrium between 70S ribosomes and their 50S and 30S subunits in favor of the free subunits, thus enhancing the availability of 30S subunits on which protein synthesis initiation begins. The polypeptide is Translation initiation factor IF-3 (Salmonella typhimurium (strain LT2 / SGSC1412 / ATCC 700720)).